The sequence spans 206 residues: MSANELTSGDFTESGEPFKLFAEWLKEAEASEPNDPNAVALATVDEDGLPNVRMVLLKGFDDDGFVFYTNFESQKGREILGQRKAAMCFHWKSLRRQVRLRGPVEIVSDAEADAYFKTRARGSRIGAWASKQSRPLESRFALEKAVAEYTARYALGEIPRPAHWSGFRIRPTSIEFWKDQAFRLHDRIEFRRPSPVGAWEKVRMYP.

FMN-binding positions include 53 to 58 (RMVLLK), 68 to 69 (YT), K75, and Q97. K58 is a substrate binding site. Residues Y115, R119, and S123 each contribute to the substrate site. Residues 132–133 (QS) and W177 each bind FMN. A substrate-binding site is contributed by 183–185 (RLH). R187 serves as a coordination point for FMN.

This sequence belongs to the pyridoxamine 5'-phosphate oxidase family. In terms of assembly, homodimer. FMN is required as a cofactor.

The catalysed reaction is pyridoxamine 5'-phosphate + O2 + H2O = pyridoxal 5'-phosphate + H2O2 + NH4(+). It catalyses the reaction pyridoxine 5'-phosphate + O2 = pyridoxal 5'-phosphate + H2O2. It participates in cofactor metabolism; pyridoxal 5'-phosphate salvage; pyridoxal 5'-phosphate from pyridoxamine 5'-phosphate: step 1/1. The protein operates within cofactor metabolism; pyridoxal 5'-phosphate salvage; pyridoxal 5'-phosphate from pyridoxine 5'-phosphate: step 1/1. Catalyzes the oxidation of either pyridoxine 5'-phosphate (PNP) or pyridoxamine 5'-phosphate (PMP) into pyridoxal 5'-phosphate (PLP). This Rhizobium etli (strain CIAT 652) protein is Pyridoxine/pyridoxamine 5'-phosphate oxidase.